The primary structure comprises 152 residues: Small ribosomal subunit protein uS11B (152 aa).

Residues 131–152 (EDVTPIPSDSTRRKGGRRGRRL) are disordered. The segment covering 143–152 (RKGGRRGRRL) has biased composition (basic residues).

This sequence belongs to the universal ribosomal protein uS11 family.

The polypeptide is Small ribosomal subunit protein uS11B (Anopheles gambiae (African malaria mosquito)).